The following is a 207-amino-acid chain: Small ribosomal subunit protein uS4c (207 aa).

The S4 RNA-binding domain maps to 92-153 (MRLDNILFRL…PKTYQSILSK (62 aa)).

The protein belongs to the universal ribosomal protein uS4 family. In terms of assembly, part of the 30S ribosomal subunit. Contacts protein S5. The interaction surface between S4 and S5 is involved in control of translational fidelity.

The protein localises to the plastid. It localises to the chloroplast. Functionally, one of the primary rRNA binding proteins, it binds directly to 16S rRNA where it nucleates assembly of the body of the 30S subunit. In terms of biological role, with S5 and S12 plays an important role in translational accuracy. The sequence is that of Small ribosomal subunit protein uS4c (rps4) from Equisetum hyemale (Dutch rush).